The primary structure comprises 137 residues: Small ribosomal subunit protein uS9c (137 aa).

The protein belongs to the universal ribosomal protein uS9 family.

It localises to the plastid. The protein localises to the chloroplast. This is Small ribosomal subunit protein uS9c (rps9) from Mesostigma viride (Green alga).